A 307-amino-acid chain; its full sequence is MDKRWSLKGMTALVTGGASGIGYAIVEELAGFGARIHVCDISEAKLNQSLSEWEKKGFQVSGSVCDVASRPEREELMQTVSSQFDGKLNILVSNVGVIRSKPTTEYTEDDFAFHISSNVEAAYHFSQLSHPLLKASGYGSIIFVSSIAGVISFDAGSIYGLTKGALIQLAKNLACEWAKDGIRANAVAPNVINTPLSQSYLEDVSFKKALLSRTPLGRVGEPNEVASLVAFLCLPAASYITGQTICVDGGLTVNGFSYQPEEALLSRTSLRRVGEPNEVSSLVVFLCLPAASYITGQMVKPFVLMEV.

An NADP(+)-binding site is contributed by 13-37 (LVTGGASGIGYAIVEELAGFGARIH). Ser146 is a binding site for substrate. Tyr159 functions as the Proton acceptor in the catalytic mechanism.

It belongs to the short-chain dehydrogenases/reductases (SDR) family. SDR65C subfamily.

The protein is Tropinone reductase homolog At2g29340 of Arabidopsis thaliana (Mouse-ear cress).